The primary structure comprises 399 residues: Argininosuccinate synthase (399 aa).

9–17 (AYSGGLDTS) provides a ligand contact to ATP. Tyr88 contributes to the L-citrulline binding site. Gly118 lines the ATP pocket. The L-aspartate site is built by Thr120, Asn124, and Asp125. Asn124 serves as a coordination point for L-citrulline. L-citrulline-binding residues include Arg128, Ser176, Glu261, and Tyr273.

It belongs to the argininosuccinate synthase family. Type 1 subfamily. As to quaternary structure, homotetramer.

It is found in the cytoplasm. It catalyses the reaction L-citrulline + L-aspartate + ATP = 2-(N(omega)-L-arginino)succinate + AMP + diphosphate + H(+). Its pathway is amino-acid biosynthesis; L-arginine biosynthesis; L-arginine from L-ornithine and carbamoyl phosphate: step 2/3. The protein is Argininosuccinate synthase of Mycobacterium leprae (strain TN).